The following is an 847-amino-acid chain: Leucine--tRNA ligase (847 aa).

The short motif at 41–51 is the 'HIGH' region element; sequence PYPSGRIHMGH. The 'KMSKS' region signature appears at 619-623; that stretch reads KMSKS. Lys-622 serves as a coordination point for ATP.

This sequence belongs to the class-I aminoacyl-tRNA synthetase family.

The protein localises to the cytoplasm. The enzyme catalyses tRNA(Leu) + L-leucine + ATP = L-leucyl-tRNA(Leu) + AMP + diphosphate. In Cereibacter sphaeroides (strain KD131 / KCTC 12085) (Rhodobacter sphaeroides), this protein is Leucine--tRNA ligase.